The following is a 70-amino-acid chain: uncharacterized protein (70 aa).

This is an uncharacterized protein from Swinepox virus (strain Kasza) (SWPV).